A 669-amino-acid polypeptide reads, in one-letter code: tRNA 5-methylaminomethyl-2-thiouridine biosynthesis bifunctional protein MnmC (669 aa).

The tRNA (mnm(5)s(2)U34)-methyltransferase stretch occupies residues 1 to 246; sequence MIKNANIHFN…KRSMLIGTLK (246 aa). The segment at 271–669 is FAD-dependent cmnm(5)s(2)U34 oxidoreductase; the sequence is IGGGIASSCI…IVRDLIRNKI (399 aa).

In the N-terminal section; belongs to the methyltransferase superfamily. tRNA (mnm(5)s(2)U34)-methyltransferase family. This sequence in the C-terminal section; belongs to the DAO family. FAD is required as a cofactor.

It localises to the cytoplasm. It carries out the reaction 5-aminomethyl-2-thiouridine(34) in tRNA + S-adenosyl-L-methionine = 5-methylaminomethyl-2-thiouridine(34) in tRNA + S-adenosyl-L-homocysteine + H(+). Catalyzes the last two steps in the biosynthesis of 5-methylaminomethyl-2-thiouridine (mnm(5)s(2)U) at the wobble position (U34) in tRNA. Catalyzes the FAD-dependent demodification of cmnm(5)s(2)U34 to nm(5)s(2)U34, followed by the transfer of a methyl group from S-adenosyl-L-methionine to nm(5)s(2)U34, to form mnm(5)s(2)U34. The protein is tRNA 5-methylaminomethyl-2-thiouridine biosynthesis bifunctional protein MnmC of Pseudoalteromonas translucida (strain TAC 125).